The following is a 255-amino-acid chain: MGRGRVELKRIENKINRQVTFSKRRTGLLKKAQEISVLCDAEVSLIVFSHKGKLFEYSSESCMEKVLERYERYSYAERQLIAPDSHVNAQTNWSMEYSRLKAKIELLERNQRHYLGEELEPMSLKDLQNLEQQLETALKHIRSRKNQLMNESLNHLQRKEKEIQEENSMLTKQIKERENILRTKQTQCEQLNRSVDDVPQPQPFQHPHLYMIAHQTSPFLNMGGLYQEEDQTAMRRNNLDLTLEPIYNYLGCYAA.

The MADS-box domain occupies 1-61; it reads MGRGRVELKR…GKLFEYSSES (61 aa). A K-box domain is found at 90 to 180; it reads QTNWSMEYSR…TKQIKERENI (91 aa). The stretch at 90 to 198 forms a coiled coil; the sequence is QTNWSMEYSR…EQLNRSVDDV (109 aa).

In terms of assembly, homodimer capable of binding to CArG-box sequences. As to expression, expressed in young flower primordia.

It is found in the nucleus. Its function is as follows. Probable transcription factor that promotes early floral meristem identity in synergy with APETALA1, FRUITFULL and LEAFY. Is required subsequently for the transition of an inflorescence meristem into a floral meristem. Seems to be partially redundant to the function of APETALA1. Positively regulates the APETALA1 and LEAFY expression. The polypeptide is Transcription factor CAULIFLOWER (CAL) (Arabidopsis thaliana (Mouse-ear cress)).